The sequence spans 438 residues: DNA primase DnaG (438 aa).

The 75-residue stretch at 169–243 (DSIIVVEGRA…DIDYVARAPY (75 aa)) folds into the Toprim domain. Glu175, Asp217, and Asp219 together coordinate Mg(2+).

Belongs to the archaeal DnaG primase family. In terms of assembly, forms a ternary complex with MCM helicase and DNA. The cofactor is Mg(2+).

The catalysed reaction is ssDNA + n NTP = ssDNA/pppN(pN)n-1 hybrid + (n-1) diphosphate.. In terms of biological role, RNA polymerase that catalyzes the synthesis of short RNA molecules used as primers for DNA polymerase during DNA replication. The sequence is that of DNA primase DnaG from Methanococcus maripaludis (strain C5 / ATCC BAA-1333).